We begin with the raw amino-acid sequence, 89 residues long: Small ribosomal subunit protein bS20 (89 aa).

Positions 1–26 are disordered; it reads MANIKASKKDALTSEKRRKKNSSRRS. Residues 16-26 show a composition bias toward basic residues; it reads KRRKKNSSRRS.

Belongs to the bacterial ribosomal protein bS20 family.

In terms of biological role, binds directly to 16S ribosomal RNA. This chain is Small ribosomal subunit protein bS20, found in Buchnera aphidicola subsp. Acyrthosiphon pisum (strain 5A).